The following is a 477-amino-acid chain: MQVLHVCSEMFPLLKTGGLADVIGALPAAQIAEGIDTRVLLPAFPDIRRGVVDAQVVTRRDTFAGRITLLYGHFNGVGIYLIDAPHLYDRPGSPYHDTNQHAYPDNVLRFALLGWVGSEMASGLDPFWRPDVVHAHDWHAGLTPAYLAARGRPAKSVFTVHNLAYQGMFYSWHMNDIELPWSFYNMHGLEFNGQISFLKAGLYYADHITAVSPTYAREITEPQYAYGMEGLLRQRHHEGRLSGILNGVDDGIWSPQNDLLLPMRYDRDTLEEKAENKRQLQIAMGLKVDDKAPLFAVVSRLTSQKGLDLVLEALPGLLEQGGQLALLGAGDPVLQEGFLAAAAEHPGKVGVQIGYHEAFSHRIMGGADVILVPSRFEPCGLTQLYGLKYGTLPLVRRTGGLADTVADSSLENLADGLATGFVFEDSNALSLLRAIRRAFVLWSRPSLWRYVQRQAMNMDFSWQVAANSYRELYQRLM.

Lys-15 provides a ligand contact to ADP-alpha-D-glucose.

It belongs to the glycosyltransferase 1 family. Bacterial/plant glycogen synthase subfamily.

It carries out the reaction [(1-&gt;4)-alpha-D-glucosyl](n) + ADP-alpha-D-glucose = [(1-&gt;4)-alpha-D-glucosyl](n+1) + ADP + H(+). Its pathway is glycan biosynthesis; glycogen biosynthesis. Its function is as follows. Synthesizes alpha-1,4-glucan chains using ADP-glucose. The chain is Glycogen synthase from Klebsiella pneumoniae subsp. pneumoniae (strain ATCC 700721 / MGH 78578).